The following is a 683-amino-acid chain: Phenoloxidase 3 (683 aa).

The propeptide occupies 1 to 48 (MADKKNLLLLFDHPTEPVFMDKGGNGTVFDVPASYVTDRYNKMCKKVQ). The N-linked (GlcNAc...) asparagine glycan is linked to Asn-25. Positions 209, 213, and 239 each coordinate Cu cation. The active-site Proton acceptor is the Glu-351. A glycan (N-linked (GlcNAc...) asparagine) is linked at Asn-358. His-366, His-370, and His-406 together coordinate Cu cation. N-linked (GlcNAc...) asparagine glycosylation is found at Asn-492 and Asn-514. 2 disulfides stabilise this stretch: Cys-574/Cys-617 and Cys-576/Cys-624.

It belongs to the tyrosinase family. Cu(2+) serves as cofactor. Post-translationally, upon activation, a trypsin type protease cleaves prophenol oxidase to yield the active enzyme.

It localises to the secreted. The catalysed reaction is 2 L-dopa + O2 = 2 L-dopaquinone + 2 H2O. The enzyme catalyses L-tyrosine + O2 = L-dopaquinone + H2O. Its function is as follows. This is a copper-containing oxidase that functions in the formation of pigments such as melanins and other polyphenolic compounds. Catalyzes the rate-limiting conversions of tyrosine to DOPA, DOPA to DOPA-quinone and possibly 5,6 dihydroxyindole to indole-5'6 quinone. This is Phenoloxidase 3 (PPO3) from Drosophila erecta (Fruit fly).